The primary structure comprises 120 residues: Large ribosomal subunit protein uL18 (120 aa).

This sequence belongs to the universal ribosomal protein uL18 family. In terms of assembly, part of the 50S ribosomal subunit; part of the 5S rRNA/L5/L18/L25 subcomplex. Contacts the 5S and 23S rRNAs.

In terms of biological role, this is one of the proteins that bind and probably mediate the attachment of the 5S RNA into the large ribosomal subunit, where it forms part of the central protuberance. This Bacillus cytotoxicus (strain DSM 22905 / CIP 110041 / 391-98 / NVH 391-98) protein is Large ribosomal subunit protein uL18.